We begin with the raw amino-acid sequence, 448 residues long: Tubulin beta-2 chain (448 aa).

Residues Gln-11, Glu-69, Ser-138, Gly-142, Thr-143, Gly-144, Asn-204, and Asn-226 each coordinate GTP. Mg(2+) is bound at residue Glu-69. The tract at residues 421 to 448 is disordered; it reads EYQQYQDATADEDGEYEDELDGQEEEDM. The span at 429-448 shows a compositional bias: acidic residues; sequence TADEDGEYEDELDGQEEEDM.

Belongs to the tubulin family. As to quaternary structure, dimer of alpha and beta chains. A typical microtubule is a hollow water-filled tube with an outer diameter of 25 nm and an inner diameter of 15 nM. Alpha-beta heterodimers associate head-to-tail to form protofilaments running lengthwise along the microtubule wall with the beta-tubulin subunit facing the microtubule plus end conferring a structural polarity. Microtubules usually have 13 protofilaments but different protofilament numbers can be found in some organisms and specialized cells. Mg(2+) is required as a cofactor.

It is found in the cytoplasm. The protein resides in the cytoskeleton. In terms of biological role, tubulin is the major constituent of microtubules, a cylinder consisting of laterally associated linear protofilaments composed of alpha- and beta-tubulin heterodimers. Microtubules grow by the addition of GTP-tubulin dimers to the microtubule end, where a stabilizing cap forms. Below the cap, tubulin dimers are in GDP-bound state, owing to GTPase activity of alpha-tubulin. In Eleusine indica (Goosegrass), this protein is Tubulin beta-2 chain (TUBB2).